The primary structure comprises 430 residues: Ribosomal protein uS12 methylthiotransferase RimO (430 aa).

The MTTase N-terminal domain maps to 2–119 (ISVYSISLGC…WPAMLAHALK (118 aa)). The [4Fe-4S] cluster site is built by Cys-11, Cys-46, Cys-81, Cys-145, Cys-149, and Cys-152. The Radical SAM core domain maps to 131–361 (STGPSYAWLK…MEVQAEISEE (231 aa)). The TRAM domain maps to 364–430 (AVHEGTRQQV…TRTYDLVALA (67 aa)).

The protein belongs to the methylthiotransferase family. RimO subfamily. The cofactor is [4Fe-4S] cluster.

It is found in the cytoplasm. The enzyme catalyses L-aspartate(89)-[ribosomal protein uS12]-hydrogen + (sulfur carrier)-SH + AH2 + 2 S-adenosyl-L-methionine = 3-methylsulfanyl-L-aspartate(89)-[ribosomal protein uS12]-hydrogen + (sulfur carrier)-H + 5'-deoxyadenosine + L-methionine + A + S-adenosyl-L-homocysteine + 2 H(+). Catalyzes the methylthiolation of an aspartic acid residue of ribosomal protein uS12. This is Ribosomal protein uS12 methylthiotransferase RimO from Nitratidesulfovibrio vulgaris (strain ATCC 29579 / DSM 644 / CCUG 34227 / NCIMB 8303 / VKM B-1760 / Hildenborough) (Desulfovibrio vulgaris).